Reading from the N-terminus, the 99-residue chain is Meromycolate extension acyl carrier protein (99 aa).

Positions 3–81 constitute a Carrier domain; the sequence is ATQEEIIAGL…DVVAYIQKLE (79 aa). Ser41 carries the O-(pantetheine 4'-phosphoryl)serine modification. Lys79 participates in a covalent cross-link: Isoglutamyl lysine isopeptide (Lys-Gln) (interchain with Q-Cter in protein Pup).

This sequence belongs to the acyl carrier protein (ACP) family. 4'-phosphopantetheine is transferred from CoA to a specific serine of apo-AcpM.

It localises to the cytoplasm. Functionally, acyl carrier protein involved in meromycolate extension. In Mycolicibacterium smegmatis (strain ATCC 700084 / mc(2)155) (Mycobacterium smegmatis), this protein is Meromycolate extension acyl carrier protein (acpM).